A 325-amino-acid polypeptide reads, in one-letter code: uncharacterized protein (325 aa).

Disordered stretches follow at residues 32-65 (LSTP…VPPI) and 99-152 (GDSL…ASSG). The Globin domain occupies 153–291 (LVPSLNRLRI…LFTGVRDGYY (139 aa)).

This is an uncharacterized protein from Caenorhabditis elegans.